We begin with the raw amino-acid sequence, 274 residues long: Penicillin-insensitive murein endopeptidase (274 aa).

An N-terminal signal peptide occupies residues 1–19; sequence MNKTAIALLALLASSASLA. Disulfide bonds link cysteine 44–cysteine 265, cysteine 187–cysteine 235, and cysteine 216–cysteine 223. Zn(2+) is bound by residues histidine 110, histidine 113, aspartate 120, aspartate 147, histidine 150, and histidine 211. Residues 227–274 form a disordered region; the sequence is PLPPPGDGCGAELQSWFEPPKPGTTKPEKKTPPPLPPSCQALLDEHVI.

It belongs to the peptidase M74 family. As to quaternary structure, dimer. Requires Zn(2+) as cofactor.

The protein resides in the periplasm. In terms of biological role, murein endopeptidase that cleaves the D-alanyl-meso-2,6-diamino-pimelyl amide bond that connects peptidoglycan strands. Likely plays a role in the removal of murein from the sacculus. In Escherichia coli O1:K1 / APEC, this protein is Penicillin-insensitive murein endopeptidase.